A 622-amino-acid chain; its full sequence is Glutamyl-tRNA(Gln) amidotransferase subunit E (622 aa).

The protein belongs to the GatB/GatE family. GatE subfamily. In terms of assembly, heterodimer of GatD and GatE.

The catalysed reaction is L-glutamyl-tRNA(Gln) + L-glutamine + ATP + H2O = L-glutaminyl-tRNA(Gln) + L-glutamate + ADP + phosphate + H(+). Allows the formation of correctly charged Gln-tRNA(Gln) through the transamidation of misacylated Glu-tRNA(Gln) in organisms which lack glutaminyl-tRNA synthetase. The reaction takes place in the presence of glutamine and ATP through an activated gamma-phospho-Glu-tRNA(Gln). The GatDE system is specific for glutamate and does not act on aspartate. The sequence is that of Glutamyl-tRNA(Gln) amidotransferase subunit E from Halobacterium salinarum (strain ATCC 29341 / DSM 671 / R1).